Consider the following 103-residue polypeptide: MQGQKIRIRLKAFDYRLIDQSTQEIVDTAKRTGAQVRGPIPLPTKKERFTVLISPHVNKDARDQYEIRTHKRLLDIVEPTEKTVDALMKLDLAAGVDVQISLG.

The protein belongs to the universal ribosomal protein uS10 family. In terms of assembly, part of the 30S ribosomal subunit.

In terms of biological role, involved in the binding of tRNA to the ribosomes. The protein is Small ribosomal subunit protein uS10 of Hahella chejuensis (strain KCTC 2396).